The following is a 452-amino-acid chain: MPSENPTDNCIASDLISTAVRILRLGPICDSCFGRQFAMLGTGMTNSERGRSIKTLMVMSADLQASDESREMLRALAPSCRQARLRLGVEGDDENCWVCLGQMYPERLEELADRAVDELKGIECSRFLVGTFMSGLLAENEELLLADGCSRHAEPMKSEINREVGKLIALKSGKQPDLNNPEVVVHLHLSDGHVEIQIQPLYIYGRYRKLQRGFPQTRWPCRVCGGRGCERCGNTGRMYQESVDELIRGPIVEAADAEDTVFHGAGREDIDARMLGSGRPFVVEVVRPRRRDLDLNALRDEINRRCSGKVEVSDLIFVDKSMVEMVKNERFEKTYEALIEFSVPVEEEKLKSALSRLIGFVEQRTPTRVSHRRADKVRRRAVHSAELEEFSGRTARITVRCDSGLYVKELISGDAGRTRPSLAELLESDARVVELDVIDVGGVPNAKITRIS.

In terms of domain architecture, THUMP spans E71–P200. D269 serves as the catalytic Nucleophile. 2 residues coordinate substrate: Y335 and Y406.

It belongs to the pseudouridine synthase Pus10 family.

The enzyme catalyses uridine(54) in tRNA = pseudouridine(54) in tRNA. It catalyses the reaction uridine(55) in tRNA = pseudouridine(55) in tRNA. Its function is as follows. Responsible for synthesis of pseudouridine from uracil-54 and uracil-55 in the psi GC loop of transfer RNAs. This is tRNA pseudouridine synthase Pus10 from Methanothrix thermoacetophila (strain DSM 6194 / JCM 14653 / NBRC 101360 / PT) (Methanosaeta thermophila).